The primary structure comprises 184 residues: Protein GrpE (184 aa).

Over residues 1–10 (MTDTPPENEE) the composition is skewed to acidic residues. A disordered region spans residues 1–22 (MTDTPPENEEQHESNVQNENEV).

Belongs to the GrpE family. As to quaternary structure, homodimer.

The protein localises to the cytoplasm. In terms of biological role, participates actively in the response to hyperosmotic and heat shock by preventing the aggregation of stress-denatured proteins, in association with DnaK and GrpE. It is the nucleotide exchange factor for DnaK and may function as a thermosensor. Unfolded proteins bind initially to DnaJ; upon interaction with the DnaJ-bound protein, DnaK hydrolyzes its bound ATP, resulting in the formation of a stable complex. GrpE releases ADP from DnaK; ATP binding to DnaK triggers the release of the substrate protein, thus completing the reaction cycle. Several rounds of ATP-dependent interactions between DnaJ, DnaK and GrpE are required for fully efficient folding. This chain is Protein GrpE, found in Chlamydia pneumoniae (Chlamydophila pneumoniae).